A 355-amino-acid chain; its full sequence is Ion-translocating oxidoreductase complex subunit D (355 aa).

The next 4 membrane-spanning stretches (helical) occupy residues 23 to 43 (WVAL…GWGT), 44 to 64 (LVQL…VMLF), 78 to 109 (ALVT…IVIA), and 129 to 149 (VVLL…LPLI). FMN phosphoryl threonine is present on Thr-194. The next 5 helical transmembrane spans lie at 221 to 241 (FAGV…LILL), 250 to 270 (IPVG…LFFP), 273 to 293 (TASP…FFIA), 307 to 327 (ILFG…GGFP), and 328 to 348 (DGVA…DYYT).

The protein belongs to the NqrB/RnfD family. The complex is composed of six subunits: RnfA, RnfB, RnfC, RnfD, RnfE and RnfG. The cofactor is FMN.

It is found in the cell inner membrane. Part of a membrane-bound complex that couples electron transfer with translocation of ions across the membrane. In Vibrio vulnificus (strain CMCP6), this protein is Ion-translocating oxidoreductase complex subunit D.